Here is a 194-residue protein sequence, read N- to C-terminus: Probable GTP-binding protein EngB (194 aa).

The region spanning 23–194 is the EngB-type G domain; it reads LNGEFVFVGR…YELIEIFGGV (172 aa). GTP contacts are provided by residues 31–38, 57–61, 75–78, 143–146, and 173–175; these read GRSNVGKS, GKTAS, DLPG, TKMD, and YSA. 2 residues coordinate Mg(2+): S38 and T59.

This sequence belongs to the TRAFAC class TrmE-Era-EngA-EngB-Septin-like GTPase superfamily. EngB GTPase family. It depends on Mg(2+) as a cofactor.

Functionally, necessary for normal cell division and for the maintenance of normal septation. The protein is Probable GTP-binding protein EngB of Thermosipho africanus (strain TCF52B).